Consider the following 436-residue polypeptide: 3-ketoacyl-CoA thiolase (436 aa).

Residue Cys-99 is the Acyl-thioester intermediate of the active site. Catalysis depends on proton acceptor residues His-392 and Cys-422.

This sequence belongs to the thiolase-like superfamily. Thiolase family. Heterotetramer of two alpha chains (FadJ) and two beta chains (FadI).

It localises to the cytoplasm. It carries out the reaction an acyl-CoA + acetyl-CoA = a 3-oxoacyl-CoA + CoA. Its pathway is lipid metabolism; fatty acid beta-oxidation. Functionally, catalyzes the final step of fatty acid oxidation in which acetyl-CoA is released and the CoA ester of a fatty acid two carbons shorter is formed. In Shewanella oneidensis (strain ATCC 700550 / JCM 31522 / CIP 106686 / LMG 19005 / NCIMB 14063 / MR-1), this protein is 3-ketoacyl-CoA thiolase.